Reading from the N-terminus, the 298-residue chain is Pantothenate synthetase (298 aa).

30–37 (MGNLHEGH) contacts ATP. His-37 acts as the Proton donor in catalysis. Residue Gln-61 participates in (R)-pantoate binding. Gln-61 is a beta-alanine binding site. 149-152 (GEKD) lines the ATP pocket. Residue Gln-155 participates in (R)-pantoate binding. ATP contacts are provided by residues Val-178 and 186–189 (MSSR).

Belongs to the pantothenate synthetase family. In terms of assembly, homodimer.

Its subcellular location is the cytoplasm. It carries out the reaction (R)-pantoate + beta-alanine + ATP = (R)-pantothenate + AMP + diphosphate + H(+). Its pathway is cofactor biosynthesis; (R)-pantothenate biosynthesis; (R)-pantothenate from (R)-pantoate and beta-alanine: step 1/1. Catalyzes the condensation of pantoate with beta-alanine in an ATP-dependent reaction via a pantoyl-adenylate intermediate. This is Pantothenate synthetase from Aliivibrio salmonicida (strain LFI1238) (Vibrio salmonicida (strain LFI1238)).